A 263-amino-acid chain; its full sequence is Tryptophan synthase alpha chain (263 aa).

Active-site proton acceptor residues include E46 and D57.

It belongs to the TrpA family. In terms of assembly, tetramer of two alpha and two beta chains.

The catalysed reaction is (1S,2R)-1-C-(indol-3-yl)glycerol 3-phosphate + L-serine = D-glyceraldehyde 3-phosphate + L-tryptophan + H2O. Its pathway is amino-acid biosynthesis; L-tryptophan biosynthesis; L-tryptophan from chorismate: step 5/5. Functionally, the alpha subunit is responsible for the aldol cleavage of indoleglycerol phosphate to indole and glyceraldehyde 3-phosphate. The sequence is that of Tryptophan synthase alpha chain from Bacteroides fragilis (strain ATCC 25285 / DSM 2151 / CCUG 4856 / JCM 11019 / LMG 10263 / NCTC 9343 / Onslow / VPI 2553 / EN-2).